Consider the following 738-residue polypeptide: Platelet endothelial cell adhesion molecule (738 aa).

Positions 1–27 are cleaved as a signal peptide; sequence MQPRWAQGATMWLGVLLTLLLCSSLEG. Residues 28–601 are Extracellular-facing; sequence QENSFTINSV…VRVILAPWKK (574 aa). Ig-like C2-type domains follow at residues 35–121, 145–233, and 236–315; these read NSVD…KTTA, GGIV…TESF, and PKFH…SKVS. N-linked (GlcNAc...) asparagine glycosylation is found at asparagine 52, asparagine 84, and asparagine 151. Cysteine 57 and cysteine 109 form a disulfide bridge. Intrachain disulfides connect cysteine 152-cysteine 206 and cysteine 256-cysteine 304. N-linked (GlcNAc...) asparagine glycans are attached at residues asparagine 301, asparagine 320, asparagine 344, asparagine 356, asparagine 453, and asparagine 551. 3 consecutive Ig-like C2-type domains span residues 328–401, 424–493, and 499–591; these read PELE…NTVQ, GQTI…EVLR, and PVDE…KILT. Cystine bridges form between cysteine 347-cysteine 386, cysteine 431-cysteine 476, and cysteine 523-cysteine 572. A helical membrane pass occupies residues 602-620; that stretch reads GLIAVVIIGVIIALLIIAA. At 621 to 738 the chain is on the cytoplasmic side; it reads KCYFLRKAKA…SRTEGSLDGT (118 aa). Cysteine 622 carries the S-palmitoyl cysteine lipid modification. Residues 658–715 are disordered; it reads EANSHYGHNDDVRNHAMKPINDNKEPLNSDVQYTEVQVSSAESHKDLGKKDTETVYSE. Residues 686 to 698 are compositionally biased toward polar residues; sequence SDVQYTEVQVSSA. Short sequence motifs (ITIM motif) lie at residues 688–693 and 711–716; these read VQYTEV and TVYSEV. Tyrosine 690 and tyrosine 713 each carry phosphotyrosine; by FER. Residues 699-715 are compositionally biased toward basic and acidic residues; the sequence is ESHKDLGKKDTETVYSE. Residues 709–729 form a membrane-bound segment which detaches upon phosphorylation region; the sequence is TETVYSEVRKAVPDAVESRYS. Residues 721–738 are may play a role in cytoprotective signaling; the sequence is PDAVESRYSRTEGSLDGT. Serine 729 and serine 734 each carry phosphoserine.

In terms of assembly, trans-homodimer (via Ig-like C2-type 1 and Ig-like C2-type 2 domains); trans-homodimerization is required for cell-cell interaction. Forms a complex with BDKRB2 and GNAQ. Interacts with BDKRB2 and GNAQ. Interacts with PTPN11; Tyr-713 is critical for PTPN11 recruitment. Interacts with FER. Interacts (via Ig-like C2-type domain 6) with CD177; the interaction is Ca(2+)-dependent; the interaction is direct. Post-translationally, phosphorylated on Ser and Tyr residues after cellular activation by src kinases. Upon activation, phosphorylated on Ser-729 which probably initiates the dissociation of the membrane-interaction segment (residues 709-729) from the cell membrane allowing the sequential phosphorylation of Tyr-713 and Tyr-690. Constitutively phosphorylated on Ser-734 in resting platelets. Phosphorylated on tyrosine residues by FER and FES in response to FCER1 activation. In endothelial cells Fyn mediates mechanical-force (stretch or pull) induced tyrosine phosphorylation. In terms of processing, palmitoylation by ZDHHC21 is necessary for cell surface expression in endothelial cells and enrichment in membrane rafts. As to expression, expressed on platelets and leukocytes and is primarily concentrated at the borders between endothelial cells. Expressed in human umbilical vein endothelial cells (HUVECs) (at protein level). Expressed on neutrophils (at protein level). Isoform Long predominates in all tissues examined. Isoform Delta12 is detected only in trachea. Isoform Delta14-15 is only detected in lung. Isoform Delta14 is detected in all tissues examined with the strongest expression in heart. Isoform Delta15 is expressed in brain, testis, ovary, cell surface of platelets, human umbilical vein endothelial cells (HUVECs), Jurkat T-cell leukemia, human erythroleukemia (HEL) and U-937 histiocytic lymphoma cell lines (at protein level).

The protein localises to the cell membrane. It is found in the membrane raft. Its subcellular location is the cell junction. Cell adhesion molecule which is required for leukocyte transendothelial migration (TEM) under most inflammatory conditions. Tyr-690 plays a critical role in TEM and is required for efficient trafficking of PECAM1 to and from the lateral border recycling compartment (LBRC) and is also essential for the LBRC membrane to be targeted around migrating leukocytes. Trans-homophilic interaction may play a role in endothelial cell-cell adhesion via cell junctions. Heterophilic interaction with CD177 plays a role in transendothelial migration of neutrophils. Homophilic ligation of PECAM1 prevents macrophage-mediated phagocytosis of neighboring viable leukocytes by transmitting a detachment signal. Promotes macrophage-mediated phagocytosis of apoptotic leukocytes by tethering them to the phagocytic cells; PECAM1-mediated detachment signal appears to be disabled in apoptotic leukocytes. Modulates bradykinin receptor BDKRB2 activation. Regulates bradykinin- and hyperosmotic shock-induced ERK1/2 activation in endothelial cells. Induces susceptibility to atherosclerosis. In terms of biological role, does not protect against apoptosis. The chain is Platelet endothelial cell adhesion molecule (PECAM1) from Homo sapiens (Human).